The primary structure comprises 491 residues: Glutamate--tRNA ligase (491 aa).

The short motif at 10-20 (PSPTGYLHIGG) is the 'HIGH' region element. The short motif at 243-247 (KISKR) is the 'KMSKS' region element. Residue Lys246 coordinates ATP.

This sequence belongs to the class-I aminoacyl-tRNA synthetase family. Glutamate--tRNA ligase type 1 subfamily. As to quaternary structure, monomer.

The protein resides in the cytoplasm. The catalysed reaction is tRNA(Glu) + L-glutamate + ATP = L-glutamyl-tRNA(Glu) + AMP + diphosphate. In terms of biological role, catalyzes the attachment of glutamate to tRNA(Glu) in a two-step reaction: glutamate is first activated by ATP to form Glu-AMP and then transferred to the acceptor end of tRNA(Glu). This Desulfotalea psychrophila (strain LSv54 / DSM 12343) protein is Glutamate--tRNA ligase.